Reading from the N-terminus, the 20-residue chain is Trypsin inhibitor DE-3 (20 aa).

Belongs to the protease inhibitor I3 (leguminous Kunitz-type inhibitor) family.

Functionally, inhibition of trypsin. This Erythrina corallodendron (Coral tree) protein is Trypsin inhibitor DE-3.